Consider the following 155-residue polypeptide: 1,4-dihydroxy-2-naphthoyl-CoA hydrolase (155 aa).

Residue Asp-22 is part of the active site.

This sequence belongs to the 4-hydroxybenzoyl-CoA thioesterase family. DHNA-CoA hydrolase subfamily.

The catalysed reaction is 1,4-dihydroxy-2-naphthoyl-CoA + H2O = 1,4-dihydroxy-2-naphthoate + CoA + H(+). It participates in cofactor biosynthesis; phylloquinone biosynthesis. It functions in the pathway quinol/quinone metabolism; 1,4-dihydroxy-2-naphthoate biosynthesis; 1,4-dihydroxy-2-naphthoate from chorismate: step 7/7. Catalyzes the hydrolysis of 1,4-dihydroxy-2-naphthoyl-CoA (DHNA-CoA) to 1,4-dihydroxy-2-naphthoate (DHNA), a reaction involved in phylloquinone (vitamin K1) biosynthesis. In Prochlorococcus marinus (strain SARG / CCMP1375 / SS120), this protein is 1,4-dihydroxy-2-naphthoyl-CoA hydrolase.